A 267-amino-acid polypeptide reads, in one-letter code: Enolase-phosphatase E1 (267 aa).

Mg(2+) is bound by residues Asp-11 and Glu-13. Substrate contacts are provided by residues 155–156 (SS) and Lys-189. Residue Asp-215 coordinates Mg(2+).

Belongs to the HAD-like hydrolase superfamily. MasA/MtnC family. As to quaternary structure, monomer. Mg(2+) serves as cofactor.

Its subcellular location is the cytoplasm. It localises to the nucleus. It catalyses the reaction 5-methylsulfanyl-2,3-dioxopentyl phosphate + H2O = 1,2-dihydroxy-5-(methylsulfanyl)pent-1-en-3-one + phosphate. It functions in the pathway amino-acid biosynthesis; L-methionine biosynthesis via salvage pathway; L-methionine from S-methyl-5-thio-alpha-D-ribose 1-phosphate: step 3/6. The protein operates within amino-acid biosynthesis; L-methionine biosynthesis via salvage pathway; L-methionine from S-methyl-5-thio-alpha-D-ribose 1-phosphate: step 4/6. Its function is as follows. Bifunctional enzyme that catalyzes the enolization of 2,3-diketo-5-methylthiopentyl-1-phosphate (DK-MTP-1-P) into the intermediate 2-hydroxy-3-keto-5-methylthiopentenyl-1-phosphate (HK-MTPenyl-1-P), which is then dephosphorylated to form the acireductone 1,2-dihydroxy-3-keto-5-methylthiopentene (DHK-MTPene). This chain is Enolase-phosphatase E1 (enoph1), found in Dictyostelium discoideum (Social amoeba).